Here is a 289-residue protein sequence, read N- to C-terminus: MRKLTSFVCGTGAGLAVYYLQRLRDPQATVNNSWTNSEKPVDPWALWDTNWDCREPRALVRPLRNSQPEEENRYNAELEKAKAKKARHIILVRHGEYLDVGDSDDTHHLTERGRKQAEFTGKRLCELGIKWDKVVASTMVRAQETSDIILKQIDFEKEKVVNCAFLREGAPIPPQPPVGHWKPEASQFLRDGSRIEAAFRRYFYRAYPDQEKESYTLIVGHGNVIRYFVCRALQFPAEGWLRISINHASITWLTISPSGNVSIKYLGDSGFMPAELLTHRIPRDAKNVV.

Residues 7–23 (FVCGTGAGLAVYYLQRL) traverse the membrane as a helical segment.

Belongs to the phosphoglycerate mutase family. BPG-dependent PGAM subfamily. In terms of assembly, interacts with Pk92B/ASK1.

Its subcellular location is the mitochondrion outer membrane. It catalyses the reaction O-phospho-L-seryl-[protein] + H2O = L-seryl-[protein] + phosphate. The catalysed reaction is O-phospho-L-threonyl-[protein] + H2O = L-threonyl-[protein] + phosphate. Displays phosphatase activity for serine/threonine residues, and dephosphorylates and activates Pk92B kinase. Has apparently no phosphoglycerate mutase activity. This is Serine/threonine-protein phosphatase Pgam5, mitochondrial from Drosophila erecta (Fruit fly).